Reading from the N-terminus, the 103-residue chain is Toxin BMLCL (103 aa).

The signal sequence occupies residues 1-21 (MKTLLLTLVVVTIICLDLGYT). 5 cysteine pairs are disulfide-bonded: cysteine 24-cysteine 45, cysteine 27-cysteine 37, cysteine 38-cysteine 72, cysteine 76-cysteine 90, and cysteine 91-cysteine 96.

Belongs to the three-finger toxin family. Ancestral subfamily. Orphan group XVII sub-subfamily. In terms of tissue distribution, expressed by the venom gland.

The protein resides in the secreted. Interacts with high efficiency with both neuronal alpha-7/CHRNA7 and muscle type nicotinic acetylcholine receptors (nAChRs). Tested on human alpha-7/CHRNA7 nAChR (IC(50)=42 nM), T.californica muscle receptor (IC(50)=31 nM), L.stagnalis and A.californica acetylcholine-binding proteins (IC(50)=333 nM and 3.4 uM, respectively). This is Toxin BMLCL from Bungarus multicinctus (Many-banded krait).